Reading from the N-terminus, the 346-residue chain is Actin-like protein 10 (346 aa).

It belongs to the actin family.

The protein is Actin-like protein 10 (Actl10) of Mus musculus (Mouse).